Here is a 116-residue protein sequence, read N- to C-terminus: Ribosome-binding factor A (116 aa).

This sequence belongs to the RbfA family. As to quaternary structure, monomer. Binds 30S ribosomal subunits, but not 50S ribosomal subunits or 70S ribosomes.

It localises to the cytoplasm. Its function is as follows. One of several proteins that assist in the late maturation steps of the functional core of the 30S ribosomal subunit. Associates with free 30S ribosomal subunits (but not with 30S subunits that are part of 70S ribosomes or polysomes). Required for efficient processing of 16S rRNA. May interact with the 5'-terminal helix region of 16S rRNA. The polypeptide is Ribosome-binding factor A (Chlorobium phaeobacteroides (strain DSM 266 / SMG 266 / 2430)).